A 284-amino-acid polypeptide reads, in one-letter code: 8-methylmenaquinol:fumarate reductase membrane anchor subunit (284 aa).

The MFR complex is composed of three subunits: a flavoprotein (SdhA), an iron-sulfur protein (SdhB), and one hydrophobic anchor protein (SdhE).

Its subcellular location is the periplasm. The protein localises to the cell membrane. The catalysed reaction is 8-methylmenaquinone-6 + succinate = 8-methylmenaquinol-6 + fumarate. Its function is as follows. Membrane anchor subunit of 8-methylmenaquinol:fumarate reductase (MFR), that catalyzes the reduction of fumarate using 8-methylmenaquinol-6 as electron donor. The complex shows no succinate oxidation activity. Is involved in anaerobic metabolism. SdhE likely contains the quinol/quinone binding site. In Wolinella succinogenes (strain ATCC 29543 / DSM 1740 / CCUG 13145 / JCM 31913 / LMG 7466 / NCTC 11488 / FDC 602W) (Vibrio succinogenes), this protein is 8-methylmenaquinol:fumarate reductase membrane anchor subunit.